The following is a 627-amino-acid chain: Zinc finger protein 256 (627 aa).

The KRAB domain occupies 14 to 96; sequence VTFEDVAVYF…QKTNPCEICG (83 aa). Positions 55 to 76 are disordered; the sequence is GSGAGDEEAPYQQSTSPQRVSQ. Residues 65–75 show a composition bias toward polar residues; it reads YQQSTSPQRVS. 15 C2H2-type zinc fingers span residues 90–112, 239–261, 267–289, 295–317, 323–345, 351–373, 379–401, 407–429, 435–457, 463–485, 491–513, 519–541, 547–569, 575–597, and 603–625; these read NPCE…QGTH, YMCS…LRVH, YTCG…RRIH, HQCD…QRVH, YKCS…QRIH, YECS…QRVH, YMCS…RRLH, HECH…ERVH, YECS…WKVH, YECG…QRVH, YECN…RRSH, YECS…RRVH, YECS…QRIH, and YECS…QNVH.

It belongs to the krueppel C2H2-type zinc-finger protein family. In terms of assembly, interacts with TRIM28.

The protein localises to the nucleus. In terms of biological role, transcriptional repressor that plays a role in cell proliferation. Requires TRIM28 for its activity. The polypeptide is Zinc finger protein 256 (ZNF256) (Homo sapiens (Human)).